The following is a 162-amino-acid chain: Nucleotide-binding protein Adeh_0094 (162 aa).

The protein belongs to the YajQ family.

Nucleotide-binding protein. The protein is Nucleotide-binding protein Adeh_0094 of Anaeromyxobacter dehalogenans (strain 2CP-C).